An 800-amino-acid chain; its full sequence is Integrin beta-5 (800 aa).

An N-terminal signal peptide occupies residues 1–24; it reads MPRAPALLFSCLLGLCALVPRLPG. Topologically, residues 25-722 are extracellular; sequence LNICTSGSAT…PECGTAPSAM (698 aa). The 50-residue stretch at 27–76 folds into the PSI domain; that stretch reads ICTSGSATSCEECLLIHPKCAWCFKEDFGSLRSVTSRCDLKANLIRNGCG. Disulfide bonds link Cys-28/Cys-46, Cys-36/Cys-463, Cys-39/Cys-64, Cys-49/Cys-75, Cys-202/Cys-211, Cys-259/Cys-300, Cys-401/Cys-413, Cys-433/Cys-461, Cys-465/Cys-484, Cys-476/Cys-487, Cys-489/Cys-498, Cys-500/Cys-530, Cys-513/Cys-528, Cys-522/Cys-533, Cys-535/Cys-548, Cys-550/Cys-571, Cys-555/Cys-569, Cys-563/Cys-574, and Cys-576/Cys-585. One can recognise a VWFA domain in the interval 136 to 378; it reads YPVDLYYLMD…QLIINAYNSI (243 aa). Ser-147 and Ser-149 together coordinate Mg(2+). Positions 149, 152, 153, and 184 each coordinate Ca(2+). Residues Asn-242, Asp-244, Pro-246, and Glu-247 each coordinate Ca(2+). Residue Glu-247 participates in Mg(2+) binding. Asn-347 carries N-linked (GlcNAc...) asparagine glycosylation. Gly-362 is a Ca(2+) binding site. I-EGF domains lie at 465–499, 500–549, 550–586, and 587–626; these read CSAG…TRCE, CQEG…SFCE, CDNF…DNCN, and CSTD…ETCE. A glycan (N-linked (GlcNAc...) asparagine) is linked at Asn-479. Asn-552 is a glycosylation site (N-linked (GlcNAc...) asparagine). Asn-586 is a glycosylation site (N-linked (GlcNAc...) asparagine). 9 cysteine pairs are disulfide-bonded: Cys-587–Cys-610, Cys-594–Cys-608, Cys-602–Cys-613, Cys-615–Cys-625, Cys-628–Cys-631, Cys-635–Cys-683, Cys-641–Cys-662, Cys-644–Cys-658, and Cys-691–Cys-715. Asn-655 and Asn-706 each carry an N-linked (GlcNAc...) asparagine glycan. Residues 723–743 traverse the membrane as a helical segment; it reads TILLAVVGSILLTGFALLVIW. Over 744-800 the chain is Cytoplasmic; the sequence is KLLVTIHDRREFAKFQSERSRARYEMASNPLYRKPISTHTVDFTFNKFNKSYNGTVD. The residue at position 771 (Ser-771) is a Phosphoserine.

It belongs to the integrin beta chain family. Heterodimer of an alpha and a beta subunit. Beta-5 (ITGB5) associates with alpha-V (ITGAV). Interacts with MYO10. Interacts with DAB2. Integrin ITGAV:ITGB5 interacts with FBLN5 (via N-terminus). ITGAV:ITGB5 interacts with CCN3. Interacts with tensin TNS3; TNS3 also interacts with PEAK1, thus acting as an adapter molecule to bridge the association of PEAK1 with ITGB5.

The protein resides in the cell membrane. Integrin alpha-V/beta-5 (ITGAV:ITGB5) is a receptor for fibronectin. It recognizes the sequence R-G-D in its ligand. The sequence is that of Integrin beta-5 (ITGB5) from Bos taurus (Bovine).